We begin with the raw amino-acid sequence, 132 residues long: NAD(P) transhydrogenase subunit alpha part 2 (132 aa).

The next 3 membrane-spanning stretches (helical) occupy residues 43–63 (PLVF…YVVW), 72–92 (PLMS…MIAI), and 103–123 (LLGS…FIVT).

As to quaternary structure, complex of an alpha and a beta chain; in Rickettsia, the alpha chain seems to be made of two subunits.

It localises to the cell inner membrane. The catalysed reaction is NAD(+) + NADPH + H(+)(in) = NADH + NADP(+) + H(+)(out). The transhydrogenation between NADH and NADP is coupled to respiration and ATP hydrolysis and functions as a proton pump across the membrane. This is NAD(P) transhydrogenase subunit alpha part 2 (pntAB) from Rickettsia prowazekii (strain Madrid E).